The chain runs to 885 residues: Pyruvate, phosphate dikinase (885 aa).

An N-terminal region spans residues 1–342; the sequence is MQRVYAFEDG…LYMLQTRNGK (342 aa). Position 91 (R91) interacts with ATP. The tract at residues 343–399 is linker 1; the sequence is MNATATVRTGVDMVEEGLITKEQAIMRIAPQSVDQLLHKNMPANYAEAPLVKGLPAS. A central region spans residues 400 to 497; that stretch reads PGAATGAVVF…EVHEGDILTI (98 aa). The Tele-phosphohistidine intermediate role is filled by H454. Residues 498 to 533 are linker 2; sequence DGSTGCVYKGEVPLEEPQVGSGYFGTILKWANEIKK. The C-terminal stretch occupies residues 534–885; it reads IGVFANADLP…QAQIRHPREN (352 aa). Substrate-binding residues include R561, R617, E752, G773, T774, N775, and D776. Residue E752 participates in Mg(2+) binding. D776 contributes to the Mg(2+) binding site. The Proton donor role is filled by C839.

Belongs to the PEP-utilizing enzyme family. Homodimer. Requires Mg(2+) as cofactor.

The catalysed reaction is pyruvate + phosphate + ATP = phosphoenolpyruvate + AMP + diphosphate + H(+). Its function is as follows. Catalyzes the dephosphorylation of phosphoenolpyruvate and diphosphate to produce ATP. The chain is Pyruvate, phosphate dikinase from Entamoeba histolytica (strain ATCC 30459 / HM-1:IMSS / ABRM).